The primary structure comprises 106 residues: Immunoglobulin lambda constant 7 (106 aa).

Positions 7 to 101 constitute an Ig-like domain; it reads PSVTLFPPSS…EGSTVEKTVA (95 aa). The cysteines at positions 28 and 87 are disulfide-linked.

Immunoglobulins are composed of two identical heavy chains and two identical light chains; disulfide-linked.

It localises to the secreted. It is found in the cell membrane. Constant region of immunoglobulin light chains. Immunoglobulins, also known as antibodies, are membrane-bound or secreted glycoproteins produced by B lymphocytes. In the recognition phase of humoral immunity, the membrane-bound immunoglobulins serve as receptors which, upon binding of a specific antigen, trigger the clonal expansion and differentiation of B lymphocytes into immunoglobulins-secreting plasma cells. Secreted immunoglobulins mediate the effector phase of humoral immunity, which results in the elimination of bound antigens. The antigen binding site is formed by the variable domain of one heavy chain, together with that of its associated light chain. Thus, each immunoglobulin has two antigen binding sites with remarkable affinity for a particular antigen. The variable domains are assembled by a process called V-(D)-J rearrangement and can then be subjected to somatic hypermutations which, after exposure to antigen and selection, allow affinity maturation for a particular antigen. The polypeptide is Immunoglobulin lambda constant 7 (Homo sapiens (Human)).